The sequence spans 230 residues: Ureidoacrylate amidohydrolase RutB (230 aa).

Asp-24 serves as the catalytic Proton acceptor. Lys-133 is a catalytic residue. The Nucleophile role is filled by Cys-166.

It belongs to the isochorismatase family. RutB subfamily.

It catalyses the reaction (Z)-3-ureidoacrylate + H2O + H(+) = (Z)-3-aminoacrylate + NH4(+) + CO2. It carries out the reaction (Z)-3-ureidoacrylate + H2O = (Z)-3-aminoacrylate + carbamate + H(+). The catalysed reaction is (Z)-2-methylureidoacrylate + H2O + H(+) = (Z)-2-methylaminoacrylate + NH4(+) + CO2. Its function is as follows. Hydrolyzes ureidoacrylate to form aminoacrylate and carbamate. The carbamate hydrolyzes spontaneously, thereby releasing one of the nitrogen atoms of the pyrimidine ring as ammonia and one of its carbon atoms as CO2. The sequence is that of Ureidoacrylate amidohydrolase RutB from Escherichia coli (strain K12 / MC4100 / BW2952).